We begin with the raw amino-acid sequence, 196 residues long: MSRYRGPRFKKIRRLGALPGLTSKRPRSGSDLKNPLRSGKRSQYRIRLEEKQKLRFHYGLTERQLLRYVHIARKAKGSTGQVLLQLLEMRLDNILFRLGMASTIPGARQLVNHRHILVNGRIVDIPSYRCKPRDIITTKDKQRSKALIQNSIASAPREELPNHLTIDSFQYKGLVNQIIDSKWIGLKINELLVVEY.

The disordered stretch occupies residues 15–41 (LGALPGLTSKRPRSGSDLKNPLRSGKR). One can recognise an S4 RNA-binding domain in the interval 89-150 (MRLDNILFRL…KQRSKALIQN (62 aa)).

Belongs to the universal ribosomal protein uS4 family. As to quaternary structure, part of the 30S ribosomal subunit. Contacts protein S5. The interaction surface between S4 and S5 is involved in control of translational fidelity.

Its subcellular location is the plastid. The protein localises to the chloroplast. In terms of biological role, one of the primary rRNA binding proteins, it binds directly to 16S rRNA where it nucleates assembly of the body of the 30S subunit. With S5 and S12 plays an important role in translational accuracy. The chain is Small ribosomal subunit protein uS4c (rps4) from Narcissus odorus (Campernelle jonquil).